We begin with the raw amino-acid sequence, 326 residues long: tRNA uridine(34) hydroxylase (326 aa).

One can recognise a Rhodanese domain in the interval 123–217 (ADPEVFVVDT…YLEEVPQEES (95 aa)). The Cysteine persulfide intermediate role is filled by cysteine 177. A compositionally biased stretch (basic and acidic residues) spans 278-288 (QVERFREREKQ). The disordered stretch occupies residues 278 to 326 (QVERFREREKQVSLANQRGEQHVGGESAKQRAQRREAKLAKKAAQRKQA). Positions 317-326 (AKKAAQRKQA) are enriched in basic residues.

The protein belongs to the TrhO family.

It carries out the reaction uridine(34) in tRNA + AH2 + O2 = 5-hydroxyuridine(34) in tRNA + A + H2O. Catalyzes oxygen-dependent 5-hydroxyuridine (ho5U) modification at position 34 in tRNAs. This Vibrio parahaemolyticus serotype O3:K6 (strain RIMD 2210633) protein is tRNA uridine(34) hydroxylase.